The following is a 376-amino-acid chain: UDP-N-acetylglucosamine 2-epimerase (376 aa).

Residues Arg10, Lys15, Asp95, Glu117, His213, Gln271, Phe276, 290 to 292 (SGG), Glu296, and Arg313 each bind substrate.

The protein belongs to the UDP-N-acetylglucosamine 2-epimerase family. As to quaternary structure, homodimer.

It is found in the cytoplasm. The catalysed reaction is UDP-N-acetyl-alpha-D-glucosamine = UDP-N-acetyl-alpha-D-mannosamine. Its pathway is bacterial outer membrane biogenesis; enterobacterial common antigen biosynthesis. Catalyzes the reversible epimerization at C-2 of UDP-N-acetylglucosamine (UDP-GlcNAc) and thereby provides bacteria with UDP-N-acetylmannosamine (UDP-ManNAc), the activated donor of ManNAc residues. This chain is UDP-N-acetylglucosamine 2-epimerase, found in Yersinia pestis.